The sequence spans 488 residues: MMNRIITANLAFLASSLMLAQVQAAEPVYPDQVKWAGLGTGVCASGYRPLTRDEAMSIKGNLVSRMGQWQITGLADRWVIMGPGYNGEIKQGTAGETWCYPNSPVSGEIPTLSDWNIPAGDEVDVQWRLVHDNDYFIKPVSYLAHYLGYAWVGGNHSPYVGEDMDVTRVGDGWLIKGNNDGGCSGYRCGEKSSIKVSNFSYTLEPDSFSHGQVTESGKQLVKTITANATNYTDLPQQVVVTLKYDKATNWSKTDTYSLSEKVTTKNKFQWPLVGETELAIEIAASQSWASQKGGSTTETVSVEARPTVPPHSSLPVRVALYKSNISYPYEFKAEVNYDLTMKGFLRWGGNAWYTHPDNRPTWEHTLLLGPFRGQGEQHPLPVDKRYIPGEVKWWDWNWTISEYGLSTMQNNLGRVLRPIRSAVTGDFYAESQFAGDIEIGQPQTRSAKAAQLRSASAEEVALTSVDLDSEALANEGFGNVSLTIVPVQ.

A signal peptide spans 1–24 (MMNRIITANLAFLASSLMLAQVQA). 2 disulfide bridges follow: Cys43/Cys99 and Cys183/Cys188. The segment at 69-85 (WQITGLADRWVIMGPGY) is interaction with host N-linked glycan. Residues 256-288 (YSLSEKVTTKNKFQWPLVGETELAIEIAASQSW) form a part of the transmembrane beta-barrel after proteolytic activation of the toxin and insertion into the host membrane region. Positions 346–355 (RWGGNAWYTH) are interaction with glycans from host GPI-anchor. A propeptide spanning residues 444 to 488 (TRSAKAAQLRSASAEEVALTSVDLDSEALANEGFGNVSLTIVPVQ) is cleaved from the precursor.

The protein belongs to the aerolysin family. Homodimer in solution; homoheptamer in the host membrane. After binding to GPI-anchored proteins in target membranes and proteolytic removal of the C-terminal propeptide, the protein assembles into a heptameric pre-pore complex. A further conformation change leads to insertion into the host membrane. In terms of processing, proteolytic cleavage and subsequent release of the propeptide trigger a major conformation change, leading to the formation of a heptameric pre-pore that then inserts into the host membrane.

Its subcellular location is the secreted. It is found in the host cell membrane. Secreted, cytolytic toxin that forms pores in host membranes after proteolytic removal of a C-terminal propeptide, leading to destruction of the membrane permeability barrier and cell death. The pores are formed by transmembrane beta-strands and are approximately 3 nm in diameter. This is Aerolysin (asa1) from Aeromonas sobria.